The chain runs to 342 residues: tRNA N6-adenosine threonylcarbamoyltransferase (342 aa).

The Fe cation site is built by His112 and His116. Substrate contacts are provided by residues 134-138, Asp167, Gly180, and Asn280; that span reads LASGG. Asp308 is a binding site for Fe cation.

The protein belongs to the KAE1 / TsaD family. Fe(2+) is required as a cofactor.

Its subcellular location is the cytoplasm. It carries out the reaction L-threonylcarbamoyladenylate + adenosine(37) in tRNA = N(6)-L-threonylcarbamoyladenosine(37) in tRNA + AMP + H(+). Its function is as follows. Required for the formation of a threonylcarbamoyl group on adenosine at position 37 (t(6)A37) in tRNAs that read codons beginning with adenine. Is involved in the transfer of the threonylcarbamoyl moiety of threonylcarbamoyl-AMP (TC-AMP) to the N6 group of A37, together with TsaE and TsaB. TsaD likely plays a direct catalytic role in this reaction. This is tRNA N6-adenosine threonylcarbamoyltransferase from Rickettsia canadensis (strain McKiel).